The following is a 285-amino-acid chain: Bifunctional protein FolD (285 aa).

Residues 166-168 (GAS) and Ile-232 contribute to the NADP(+) site.

Belongs to the tetrahydrofolate dehydrogenase/cyclohydrolase family. As to quaternary structure, homodimer.

It carries out the reaction (6R)-5,10-methylene-5,6,7,8-tetrahydrofolate + NADP(+) = (6R)-5,10-methenyltetrahydrofolate + NADPH. It catalyses the reaction (6R)-5,10-methenyltetrahydrofolate + H2O = (6R)-10-formyltetrahydrofolate + H(+). The protein operates within one-carbon metabolism; tetrahydrofolate interconversion. Functionally, catalyzes the oxidation of 5,10-methylenetetrahydrofolate to 5,10-methenyltetrahydrofolate and then the hydrolysis of 5,10-methenyltetrahydrofolate to 10-formyltetrahydrofolate. The protein is Bifunctional protein FolD of Vibrio vulnificus (strain CMCP6).